A 64-amino-acid chain; its full sequence is Putative isoleucine--tRNA ligase (64 aa).

It belongs to the class-I aminoacyl-tRNA synthetase family. As to quaternary structure, member of a complex that includes annexin.

The catalysed reaction is tRNA(Ile) + L-isoleucine + ATP = L-isoleucyl-tRNA(Ile) + AMP + diphosphate. The polypeptide is Putative isoleucine--tRNA ligase (Physarum polycephalum (Slime mold)).